Consider the following 295-residue polypeptide: Small ribosomal subunit protein uS2 (295 aa).

It belongs to the universal ribosomal protein uS2 family.

This Rickettsia typhi (strain ATCC VR-144 / Wilmington) protein is Small ribosomal subunit protein uS2.